The sequence spans 63 residues: Large ribosomal subunit protein bL32 (63 aa).

This sequence belongs to the bacterial ribosomal protein bL32 family.

This is Large ribosomal subunit protein bL32 from Lactobacillus delbrueckii subsp. bulgaricus (strain ATCC 11842 / DSM 20081 / BCRC 10696 / JCM 1002 / NBRC 13953 / NCIMB 11778 / NCTC 12712 / WDCM 00102 / Lb 14).